The following is a 33-amino-acid chain: Dermonecrotic toxin LbSicTox-alphaIB1b (33 aa).

The active site involves His11. Positions 31 and 33 each coordinate Mg(2+).

It belongs to the arthropod phospholipase D family. Class II subfamily. Mg(2+) is required as a cofactor. Contains 2 disulfide bonds. As to expression, expressed by the venom gland.

Its subcellular location is the secreted. It carries out the reaction an N-(acyl)-sphingosylphosphocholine = an N-(acyl)-sphingosyl-1,3-cyclic phosphate + choline. The enzyme catalyses an N-(acyl)-sphingosylphosphoethanolamine = an N-(acyl)-sphingosyl-1,3-cyclic phosphate + ethanolamine. The catalysed reaction is a 1-acyl-sn-glycero-3-phosphocholine = a 1-acyl-sn-glycero-2,3-cyclic phosphate + choline. It catalyses the reaction a 1-acyl-sn-glycero-3-phosphoethanolamine = a 1-acyl-sn-glycero-2,3-cyclic phosphate + ethanolamine. Functionally, dermonecrotic toxins cleave the phosphodiester linkage between the phosphate and headgroup of certain phospholipids (sphingolipid and lysolipid substrates), forming an alcohol (often choline) and a cyclic phosphate. This toxin acts on sphingomyelin (SM) with high activity (9.5 U/mg). It may also act on ceramide phosphoethanolamine (CPE), lysophosphatidylcholine (LPC) and lysophosphatidylethanolamine (LPE), but not on lysophosphatidylserine (LPS), and lysophosphatidylglycerol (LPG). It acts by transphosphatidylation, releasing exclusively cyclic phosphate products as second products. Induces dermonecrosis, hemolysis, increased vascular permeability, edema, inflammatory response, and platelet aggregation. This Loxosceles boneti (North American fiddleback spider) protein is Dermonecrotic toxin LbSicTox-alphaIB1b.